The chain runs to 305 residues: Transcriptional activator protein PfeR (305 aa).

The Response regulatory domain maps to 79-192; sequence RLLLVEDDPR…ELDARTDALL (114 aa). At Asp-128 the chain carries 4-aspartylphosphate. Positions 200-301 form a DNA-binding region, ompR/PhoB-type; the sequence is LPLAQRRDTR…VRGQGYLLVE (102 aa).

Post-translationally, phosphorylated by PfeS.

The protein localises to the cytoplasm. Its function is as follows. Member of the two-component regulatory system PfeR/PfeS. Activates expression of the ferric enterobactin receptor. This Pseudomonas aeruginosa (strain ATCC 15692 / DSM 22644 / CIP 104116 / JCM 14847 / LMG 12228 / 1C / PRS 101 / PAO1) protein is Transcriptional activator protein PfeR (pfeR).